The following is a 460-amino-acid chain: Tyrosine phenol-lyase (460 aa).

At lysine 260 the chain carries N6-(pyridoxal phosphate)lysine.

The protein belongs to the beta-eliminating lyase family. In terms of assembly, homotetramer. It depends on pyridoxal 5'-phosphate as a cofactor.

It catalyses the reaction L-tyrosine + H2O = phenol + pyruvate + NH4(+). The polypeptide is Tyrosine phenol-lyase (Clostridium tetani (strain Massachusetts / E88)).